A 129-amino-acid chain; its full sequence is Small ribosomal subunit protein uS8 (129 aa).

It belongs to the universal ribosomal protein uS8 family. In terms of assembly, part of the 30S ribosomal subunit. Contacts proteins S5 and S12.

Functionally, one of the primary rRNA binding proteins, it binds directly to 16S rRNA central domain where it helps coordinate assembly of the platform of the 30S subunit. The polypeptide is Small ribosomal subunit protein uS8 (Legionella pneumophila (strain Corby)).